The following is a 291-amino-acid chain: HTH-type transcriptional activator AmpR (291 aa).

The 58-residue stretch at 6-63 (IPLNSLRAFEAAARHLSFTRAAIELNVTHSAISQHVKSLEQQLNCQLFVRGSRGLMLT) folds into the HTH lysR-type domain. Residues 23 to 42 (FTRAAIELNVTHSAISQHVK) constitute a DNA-binding region (H-T-H motif).

The protein belongs to the LysR transcriptional regulatory family.

It is found in the cytoplasm. Its function is as follows. Regulates the expression of the beta-lactamase gene. Represses cephalosporinase (AmpC) in the presence of beta-lactams and induces it in the absence of them. The polypeptide is HTH-type transcriptional activator AmpR (ampR) (Citrobacter freundii).